Here is a 587-residue protein sequence, read N- to C-terminus: 2-succinyl-5-enolpyruvyl-6-hydroxy-3-cyclohexene-1-carboxylate synthase (587 aa).

This sequence belongs to the TPP enzyme family. MenD subfamily. As to quaternary structure, homodimer. It depends on Mg(2+) as a cofactor. Mn(2+) is required as a cofactor. Thiamine diphosphate serves as cofactor.

It catalyses the reaction isochorismate + 2-oxoglutarate + H(+) = 5-enolpyruvoyl-6-hydroxy-2-succinyl-cyclohex-3-ene-1-carboxylate + CO2. It functions in the pathway quinol/quinone metabolism; 1,4-dihydroxy-2-naphthoate biosynthesis; 1,4-dihydroxy-2-naphthoate from chorismate: step 2/7. Its pathway is cofactor biosynthesis; phylloquinone biosynthesis. Functionally, catalyzes the thiamine diphosphate-dependent decarboxylation of 2-oxoglutarate and the subsequent addition of the resulting succinic semialdehyde-thiamine pyrophosphate anion to isochorismate to yield 2-succinyl-5-enolpyruvyl-6-hydroxy-3-cyclohexene-1-carboxylate (SEPHCHC). This is 2-succinyl-5-enolpyruvyl-6-hydroxy-3-cyclohexene-1-carboxylate synthase from Prochlorococcus marinus (strain MIT 9301).